We begin with the raw amino-acid sequence, 614 residues long: Threonine--tRNA ligase (614 aa).

The editing domain stretch occupies residues 1–138 (MRILTIHARK…PLSELSKTIR (138 aa)). Catalytic stretches follow at residues 195-492 (NRVN…PYIP) and 196-492 (RVND…PYIP). Residues C289, H340, and H461 each coordinate Zn(2+).

It belongs to the class-II aminoacyl-tRNA synthetase family. In terms of assembly, homodimer. Zn(2+) serves as cofactor.

Its subcellular location is the cytoplasm. It carries out the reaction tRNA(Thr) + L-threonine + ATP = L-threonyl-tRNA(Thr) + AMP + diphosphate + H(+). Its function is as follows. Catalyzes the attachment of threonine to tRNA(Thr) in a two-step reaction: L-threonine is first activated by ATP to form Thr-AMP and then transferred to the acceptor end of tRNA(Thr). Also edits incorrectly charged L-seryl-tRNA(Thr). In Staphylothermus marinus (strain ATCC 43588 / DSM 3639 / JCM 9404 / F1), this protein is Threonine--tRNA ligase.